The sequence spans 211 residues: Glycerol-3-phosphate acyltransferase 2 (211 aa).

5 consecutive transmembrane segments (helical) span residues 6-26 (FASL…VVVG), 57-77 (IIVF…PVIF), 82-102 (HYLC…PIFL), 124-144 (FFLI…MVSL), and 148-168 (ISVV…LSII).

The protein belongs to the PlsY family. Probably interacts with PlsX.

Its subcellular location is the cell membrane. The catalysed reaction is an acyl phosphate + sn-glycerol 3-phosphate = a 1-acyl-sn-glycero-3-phosphate + phosphate. Its pathway is lipid metabolism; phospholipid metabolism. Catalyzes the transfer of an acyl group from acyl-phosphate (acyl-PO(4)) to glycerol-3-phosphate (G3P) to form lysophosphatidic acid (LPA). This enzyme utilizes acyl-phosphate as fatty acyl donor, but not acyl-CoA or acyl-ACP. The sequence is that of Glycerol-3-phosphate acyltransferase 2 from Lactobacillus acidophilus (strain ATCC 700396 / NCK56 / N2 / NCFM).